The sequence spans 177 residues: MLDAFSRVVVNSDTKAAYVGGSDLQALKKFIADGNKRLDSVNAIVSNASCVVSDAVSGMICENPGLITPGGNCYTNRRMAACLRDGEIIIRYVSYALLSGDPSVLEDRCLNGLKETYIALGVPTNSNARAVDIMKASVVALINNTATLRKMPTPSGDCSALAAEAGSYFDRVNSALS.

Residues C50 and C61 each coordinate phycourobilin. N72 is modified (N4-methylasparagine). Positions 82 and 158 each coordinate (2R,3E)-phycoerythrobilin.

The protein belongs to the phycobiliprotein family. In terms of assembly, heteromer of 6 alpha, 6 beta and one gamma chain. In terms of processing, contains two covalently linked phycoerythrobilin chromophores and one covalently linked phycourobilin chromophore.

It localises to the plastid. The protein resides in the chloroplast thylakoid membrane. Light-harvesting photosynthetic bile pigment-protein from the phycobiliprotein complex. The sequence is that of B-phycoerythrin beta chain (cpeB) from Rhodella violacea (Red alga).